The sequence spans 124 residues: Small ribosomal subunit protein uS12 (124 aa).

A 3-methylthioaspartic acid modification is found at Asp89.

Belongs to the universal ribosomal protein uS12 family. As to quaternary structure, part of the 30S ribosomal subunit. Contacts proteins S8 and S17. May interact with IF1 in the 30S initiation complex.

With S4 and S5 plays an important role in translational accuracy. Functionally, interacts with and stabilizes bases of the 16S rRNA that are involved in tRNA selection in the A site and with the mRNA backbone. Located at the interface of the 30S and 50S subunits, it traverses the body of the 30S subunit contacting proteins on the other side and probably holding the rRNA structure together. The combined cluster of proteins S8, S12 and S17 appears to hold together the shoulder and platform of the 30S subunit. This is Small ribosomal subunit protein uS12 from Shewanella halifaxensis (strain HAW-EB4).